The sequence spans 840 residues: Kinesin-like protein KIN-14J (840 aa).

The disordered stretch occupies residues 1–74 (MEADPAPSST…KGEEPVVSAE (74 aa)). A Kinesin motor domain is found at 177 to 501 (NIRVFCRCRP…LNFASRVRAI (325 aa)). Residue 260–267 (GQTGTGKT) coordinates ATP. The stretch at 517–594 (KLKQMTEKIR…KKAARDTARS (78 aa)) forms a coiled coil. The span at 581 to 593 (LANEKKAARDTAR) shows a compositional bias: basic and acidic residues. The tract at residues 581 to 617 (LANEKKAARDTARSTKPPLAPMRQRPPLGRIGNHIPP) is disordered.

The protein belongs to the TRAFAC class myosin-kinesin ATPase superfamily. Kinesin family. KIN-14 subfamily.

In Oryza sativa subsp. japonica (Rice), this protein is Kinesin-like protein KIN-14J.